Consider the following 607-residue polypeptide: Aspartate--tRNA(Asp/Asn) ligase (607 aa).

Glu173 contacts L-aspartate. The interval 197–200 (QLFK) is aspartate. Arg219 lines the L-aspartate pocket. Residues 219–221 (RDE) and Gln228 each bind ATP. Residue His456 coordinates L-aspartate. Position 498 (Glu498) interacts with ATP. Arg505 contributes to the L-aspartate binding site. 550–553 (GLDR) is an ATP binding site.

The protein belongs to the class-II aminoacyl-tRNA synthetase family. Type 1 subfamily. In terms of assembly, homodimer.

It localises to the cytoplasm. The catalysed reaction is tRNA(Asx) + L-aspartate + ATP = L-aspartyl-tRNA(Asx) + AMP + diphosphate. Its function is as follows. Aspartyl-tRNA synthetase with relaxed tRNA specificity since it is able to aspartylate not only its cognate tRNA(Asp) but also tRNA(Asn). Reaction proceeds in two steps: L-aspartate is first activated by ATP to form Asp-AMP and then transferred to the acceptor end of tRNA(Asp/Asn). The polypeptide is Aspartate--tRNA(Asp/Asn) ligase (Magnetococcus marinus (strain ATCC BAA-1437 / JCM 17883 / MC-1)).